The chain runs to 86 residues: Putative membrane protein insertion efficiency factor (86 aa).

This sequence belongs to the UPF0161 family.

Its subcellular location is the cell inner membrane. In terms of biological role, could be involved in insertion of integral membrane proteins into the membrane. The protein is Putative membrane protein insertion efficiency factor of Pasteurella multocida (strain Pm70).